The chain runs to 538 residues: MEIKEISVPQQGVVADYMNGKKEIQSCFDYMLTEDAFKQRVQDLREREFFRQDLVAHLLEYNTKLQAGEATIQNVKALGDEDTYVVIAGQQAGLLTGPLYTIHKIISVLQLAKEKEESLGVKVVPVFWIAGEDHDMDEINHTFVTKNKKIKKTIFHDRNPKKASASESELSLEDCRKWIEEIFKTYPETNFTKDVLQFIDDSLGESNTYVDFFGHLIMKMFINSGLILVDSHHPELRKLEVPFFKQIISKYKEVQEGLHNQQEVIKELGYKPIIETKSNAVHIFMEIDNERVLLEDNQGKFVGKDGTYSFSYEELIEEMERSPERFSNNVVTRPLMQEYVFPTLAFIGGPGELAYWSELQQVFHTIGFRMPPVVPRITITYIERDIATDLHDLQLQESDPFLNNVDKLRENWLSNQIEEPIDERFVEAKKEIIDIHKSLQQFVKKIDPGLSSFAGKNEFKINEQIELLERMLKRNVEKKHEVELNKFRRIQFAIRPLGAPQERVWNVCYYLNQFGLDFVDRVMENSFSWNGKHHVIKL.

Residues 460–484 are a coiled coil; it reads KINEQIELLERMLKRNVEKKHEVEL.

The protein belongs to the BshC family.

In terms of biological role, involved in bacillithiol (BSH) biosynthesis. May catalyze the last step of the pathway, the addition of cysteine to glucosamine malate (GlcN-Mal) to generate BSH. This Bacillus cereus (strain ATCC 10987 / NRS 248) protein is Putative cysteine ligase BshC.